A 254-amino-acid chain; its full sequence is Type III pantothenate kinase (254 aa).

ATP is bound at residue 6–13 (DVGNTNTT). Substrate contacts are provided by residues tyrosine 100 and 107 to 110 (GADR). Residue aspartate 109 is the Proton acceptor of the active site. Residue aspartate 129 coordinates K(+). Position 132 (threonine 132) interacts with ATP. Threonine 184 lines the substrate pocket.

This sequence belongs to the type III pantothenate kinase family. In terms of assembly, homodimer. NH4(+) is required as a cofactor. It depends on K(+) as a cofactor.

Its subcellular location is the cytoplasm. The enzyme catalyses (R)-pantothenate + ATP = (R)-4'-phosphopantothenate + ADP + H(+). Its pathway is cofactor biosynthesis; coenzyme A biosynthesis; CoA from (R)-pantothenate: step 1/5. Its function is as follows. Catalyzes the phosphorylation of pantothenate (Pan), the first step in CoA biosynthesis. This is Type III pantothenate kinase from Anaeromyxobacter dehalogenans (strain 2CP-C).